The following is a 134-amino-acid chain: uncharacterized protein (134 aa).

This is an uncharacterized protein from Methanocaldococcus jannaschii (strain ATCC 43067 / DSM 2661 / JAL-1 / JCM 10045 / NBRC 100440) (Methanococcus jannaschii).